We begin with the raw amino-acid sequence, 120 residues long: MFLLYEYDIFWAFLIISIFIPILAFTISGFLAPINKGPEKLSSYESGIEPMGDAWLQFQIRYYMFALVFVVFDVETVFLYPWAMSFDVLGISVFIEALIFVLILIVGSVYAWRKGALEWS.

Helical transmembrane passes span 9–29 (IFWA…TISG), 64–84 (MFAL…PWAM), and 88–108 (VLGI…IVGS).

The protein belongs to the complex I subunit 3 family. In terms of assembly, NDH is composed of at least 16 different subunits, 5 of which are encoded in the nucleus.

The protein resides in the plastid. It localises to the chloroplast thylakoid membrane. It catalyses the reaction a plastoquinone + NADH + (n+1) H(+)(in) = a plastoquinol + NAD(+) + n H(+)(out). The catalysed reaction is a plastoquinone + NADPH + (n+1) H(+)(in) = a plastoquinol + NADP(+) + n H(+)(out). Its function is as follows. NDH shuttles electrons from NAD(P)H:plastoquinone, via FMN and iron-sulfur (Fe-S) centers, to quinones in the photosynthetic chain and possibly in a chloroplast respiratory chain. The immediate electron acceptor for the enzyme in this species is believed to be plastoquinone. Couples the redox reaction to proton translocation, and thus conserves the redox energy in a proton gradient. This is NAD(P)H-quinone oxidoreductase subunit 3, chloroplastic from Lotus japonicus (Lotus corniculatus var. japonicus).